The sequence spans 153 residues: Sec-independent protein translocase protein TatB (153 aa).

The chain crosses the membrane as a helical span at residues 1–21 (MFGISFSELLLVGLVALLVLG). Residues 78 to 153 (MFAQNQHPET…HDSSLPPRAP (76 aa)) form a disordered region.

This sequence belongs to the TatB family. The Tat system comprises two distinct complexes: a TatABC complex, containing multiple copies of TatA, TatB and TatC subunits, and a separate TatA complex, containing only TatA subunits. Substrates initially bind to the TatABC complex, which probably triggers association of the separate TatA complex to form the active translocon.

Its subcellular location is the cell inner membrane. Its function is as follows. Part of the twin-arginine translocation (Tat) system that transports large folded proteins containing a characteristic twin-arginine motif in their signal peptide across membranes. Together with TatC, TatB is part of a receptor directly interacting with Tat signal peptides. TatB may form an oligomeric binding site that transiently accommodates folded Tat precursor proteins before their translocation. The chain is Sec-independent protein translocase protein TatB from Pseudomonas savastanoi pv. phaseolicola (strain 1448A / Race 6) (Pseudomonas syringae pv. phaseolicola (strain 1448A / Race 6)).